The following is a 453-amino-acid chain: Acid phosphatase (453 aa).

The N-terminal stretch at 1 to 18 (MFLQNLFLGFLAVVCANA) is a signal peptide. His-69 serves as the catalytic Nucleophile. Residues Asn-95, Asn-151, Asn-183, Asn-193, Asn-243, and Asn-319 are each glycosylated (N-linked (GlcNAc...) asparagine). The active-site Proton donor is Asp-331. Asn-410, Asn-429, and Asn-443 each carry an N-linked (GlcNAc...) asparagine glycan.

The protein belongs to the histidine acid phosphatase family.

Its subcellular location is the secreted. The protein localises to the cell wall. It catalyses the reaction a phosphate monoester + H2O = an alcohol + phosphate. The chain is Acid phosphatase (pho1) from Schizosaccharomyces pombe (strain 972 / ATCC 24843) (Fission yeast).